The primary structure comprises 274 residues: Light-independent protochlorophyllide reductase iron-sulfur ATP-binding protein (274 aa).

ATP-binding positions include 12–17 (GIGKST) and Lys-41. Ser-16 contributes to the Mg(2+) binding site. Residues Cys-97 and Cys-131 each contribute to the [4Fe-4S] cluster site.

It belongs to the NifH/BchL/ChlL family. Homodimer. Protochlorophyllide reductase is composed of three subunits; BchL, BchN and BchB. It depends on [4Fe-4S] cluster as a cofactor.

The catalysed reaction is chlorophyllide a + oxidized 2[4Fe-4S]-[ferredoxin] + 2 ADP + 2 phosphate = protochlorophyllide a + reduced 2[4Fe-4S]-[ferredoxin] + 2 ATP + 2 H2O. It functions in the pathway porphyrin-containing compound metabolism; bacteriochlorophyll biosynthesis (light-independent). Its function is as follows. Component of the dark-operative protochlorophyllide reductase (DPOR) that uses Mg-ATP and reduced ferredoxin to reduce ring D of protochlorophyllide (Pchlide) to form chlorophyllide a (Chlide). This reaction is light-independent. The L component serves as a unique electron donor to the NB-component of the complex, and binds Mg-ATP. In Chloroherpeton thalassium (strain ATCC 35110 / GB-78), this protein is Light-independent protochlorophyllide reductase iron-sulfur ATP-binding protein.